The primary structure comprises 95 residues: Co-chaperonin GroES (95 aa).

The tract at residues Gln-36 to Val-55 is disordered.

It belongs to the GroES chaperonin family. Heptamer of 7 subunits arranged in a ring. Interacts with the chaperonin GroEL.

Its subcellular location is the cytoplasm. Together with the chaperonin GroEL, plays an essential role in assisting protein folding. The GroEL-GroES system forms a nano-cage that allows encapsulation of the non-native substrate proteins and provides a physical environment optimized to promote and accelerate protein folding. GroES binds to the apical surface of the GroEL ring, thereby capping the opening of the GroEL channel. In Natranaerobius thermophilus (strain ATCC BAA-1301 / DSM 18059 / JW/NM-WN-LF), this protein is Co-chaperonin GroES.